The primary structure comprises 361 residues: MEKKILEYLKRLEEVEVKISNPEIFENPKEYSSLSKEHARLSELKNVYDKVLGQEKILNDDKEALAQEKDPEMIAMLEEGIQLGKAEVDKLYKVLENLLVPPDPDDDLNVIMELRAGTGGDEAALFVGDCVRMYHLYASTKGWKYEVLSASESDIGGYKEYVMGISGAAVKRLLQYEAGTHRVQRVPETETQGRVHTSAITVAVLPEPAEDDEEVFIDEKDLKIDTFRASGAGGQHVNVTDSAVRITHLPTGVVVTCQDERSQHKNKAKAMRILKARIRDAEMQRRQKEASAMRSAQVGSGDRSERIRTYNFSQNRVTDHRIGLTLYNLDKVMEGDLDAITSALVSHAYHQLLQHGNEENS.

Residue glutamine 235 is modified to N5-methylglutamine. The interval 287–309 is disordered; sequence QKEASAMRSAQVGSGDRSERIRT.

Belongs to the prokaryotic/mitochondrial release factor family. In terms of processing, methylated by PrmC. Methylation increases the termination efficiency of RF1.

It is found in the cytoplasm. Peptide chain release factor 1 directs the termination of translation in response to the peptide chain termination codons UAG and UAA. This Chlamydia caviae (strain ATCC VR-813 / DSM 19441 / 03DC25 / GPIC) (Chlamydophila caviae) protein is Peptide chain release factor 1.